A 95-amino-acid chain; its full sequence is Pyrimidine/purine nucleoside phosphorylase (95 aa).

The protein belongs to the nucleoside phosphorylase PpnP family.

It carries out the reaction a purine D-ribonucleoside + phosphate = a purine nucleobase + alpha-D-ribose 1-phosphate. The catalysed reaction is adenosine + phosphate = alpha-D-ribose 1-phosphate + adenine. The enzyme catalyses cytidine + phosphate = cytosine + alpha-D-ribose 1-phosphate. It catalyses the reaction guanosine + phosphate = alpha-D-ribose 1-phosphate + guanine. It carries out the reaction inosine + phosphate = alpha-D-ribose 1-phosphate + hypoxanthine. The catalysed reaction is thymidine + phosphate = 2-deoxy-alpha-D-ribose 1-phosphate + thymine. The enzyme catalyses uridine + phosphate = alpha-D-ribose 1-phosphate + uracil. It catalyses the reaction xanthosine + phosphate = alpha-D-ribose 1-phosphate + xanthine. Catalyzes the phosphorolysis of diverse nucleosides, yielding D-ribose 1-phosphate and the respective free bases. Can use uridine, adenosine, guanosine, cytidine, thymidine, inosine and xanthosine as substrates. Also catalyzes the reverse reactions. The sequence is that of Pyrimidine/purine nucleoside phosphorylase from Edwardsiella ictaluri (strain 93-146).